The chain runs to 263 residues: Imidazole glycerol phosphate synthase subunit HisF (263 aa).

Residues D11 and D131 contribute to the active site.

It belongs to the HisA/HisF family. In terms of assembly, heterodimer of HisH and HisF.

The protein localises to the cytoplasm. The catalysed reaction is 5-[(5-phospho-1-deoxy-D-ribulos-1-ylimino)methylamino]-1-(5-phospho-beta-D-ribosyl)imidazole-4-carboxamide + L-glutamine = D-erythro-1-(imidazol-4-yl)glycerol 3-phosphate + 5-amino-1-(5-phospho-beta-D-ribosyl)imidazole-4-carboxamide + L-glutamate + H(+). It participates in amino-acid biosynthesis; L-histidine biosynthesis; L-histidine from 5-phospho-alpha-D-ribose 1-diphosphate: step 5/9. In terms of biological role, IGPS catalyzes the conversion of PRFAR and glutamine to IGP, AICAR and glutamate. The HisF subunit catalyzes the cyclization activity that produces IGP and AICAR from PRFAR using the ammonia provided by the HisH subunit. The chain is Imidazole glycerol phosphate synthase subunit HisF from Deinococcus geothermalis (strain DSM 11300 / CIP 105573 / AG-3a).